The following is a 336-amino-acid chain: Syntaxin-31 (336 aa).

Residues 1 to 314 are Cytoplasmic-facing; the sequence is MGSTFRDRTV…QHLTRISSNR (314 aa). Disordered regions lie at residues 23–53 and 152–218; these read GAIPSVHQDEDDPASSKRSSPGSEFNKKASR and RSEN…SQLR. Residues 154–163 are compositionally biased toward basic and acidic residues; it reads ENMKAHENRK. The span at 164–181 shows a compositional bias: polar residues; it reads QLFSTKNAVDSPPQNNAK. The span at 190 to 202 shows a compositional bias: low complexity; it reads SSSSNPFGNLQQP. Residues 244-306 enclose the t-SNARE coiled-coil homology domain; the sequence is ENYSQSRAVA…EGARSALLQH (63 aa). The chain crosses the membrane as a helical; Anchor for type IV membrane protein span at residues 315 to 335; sequence WLMMKIFAVIILFLIVFLFFV. Residue A336 is a topological domain, vesicular.

Belongs to the syntaxin family. As to quaternary structure, part of the t-SNARE complex. Interacts with CDC48A, but not with VPS45.

The protein localises to the golgi apparatus. It is found in the cis-Golgi network membrane. Its subcellular location is the cytoplasm. The protein resides in the endosome. Functionally, vesicle trafficking protein that functions in the secretory pathway. The chain is Syntaxin-31 (SYP31) from Arabidopsis thaliana (Mouse-ear cress).